The following is an 89-amino-acid chain: UPF0335 protein Nham_1221 (89 aa).

The protein belongs to the UPF0335 family.

In Nitrobacter hamburgensis (strain DSM 10229 / NCIMB 13809 / X14), this protein is UPF0335 protein Nham_1221.